A 308-amino-acid polypeptide reads, in one-letter code: MSGILEVYDAKRTDNLIITLEGISGSETIKAIKKRIAQKKLKLTEERQALRVEPKGKPLADDQKLSDLGLSSQKAVLYVRDLGPQIAWKTVFMAEYAGPLFVYPLFYLRPTFIYGQAAVNATMHPAVQIAFFAWSFHYAKRLFETQFIHRFGNSTMPQFNLVKNCSYYWGFAAFVAYFVNHPLFTPPAFGDLQVYFGLAGFVISEFGNLSIHILLRNLRPAGTRERRIPKPDGNPLSLLFNYVSCPNYTYEVASWIFFSIMVQSLPAIIFTTAGFAQMAIWAQGKHRNYLKEFPDYPKNRKAIVPFVL.

The 79-residue stretch at 7–85 (VYDAKRTDNL…VLYVRDLGPQ (79 aa)) folds into the Ubiquitin-like domain. 4 helical membrane-spanning segments follow: residues 112 to 132 (FIYG…IAFF), 169 to 189 (WGFA…PPAF), 194 to 214 (VYFG…IHIL), and 255 to 275 (WIFF…TAGF).

Belongs to the steroid 5-alpha reductase family.

Its subcellular location is the endoplasmic reticulum membrane. The enzyme catalyses a very-long-chain 2,3-saturated fatty acyl-CoA + NADP(+) = a very-long-chain (2E)-enoyl-CoA + NADPH + H(+). It participates in lipid metabolism; fatty acid biosynthesis. Its function is as follows. Catalyzes the last of the four reactions of the long-chain fatty acids elongation cycle. This endoplasmic reticulum-bound enzymatic process, allows the addition of 2 carbons to the chain of long- and very long-chain fatty acids/VLCFAs per cycle. This enzyme reduces the trans-2,3-enoyl-CoA fatty acid intermediate to an acyl-CoA that can be further elongated by entering a new cycle of elongation. Thereby, it participates in the production of VLCFAs of different chain lengths that are involved in multiple biological processes as precursors of membrane lipids and lipid mediators. This is Probable very-long-chain enoyl-CoA reductase art-1 (art-1) from Caenorhabditis elegans.